Reading from the N-terminus, the 349-residue chain is Beta-hexosaminidase (349 aa).

Residues aspartate 64, arginine 72, arginine 138, and lysine 168–histidine 169 each bind substrate. Histidine 181 (proton donor/acceptor) is an active-site residue. The active-site Nucleophile is aspartate 252.

This sequence belongs to the glycosyl hydrolase 3 family. NagZ subfamily.

The protein resides in the cytoplasm. The enzyme catalyses Hydrolysis of terminal non-reducing N-acetyl-D-hexosamine residues in N-acetyl-beta-D-hexosaminides.. Its pathway is cell wall biogenesis; peptidoglycan recycling. Functionally, plays a role in peptidoglycan recycling by cleaving the terminal beta-1,4-linked N-acetylglucosamine (GlcNAc) from peptide-linked peptidoglycan fragments, giving rise to free GlcNAc, anhydro-N-acetylmuramic acid and anhydro-N-acetylmuramic acid-linked peptides. The sequence is that of Beta-hexosaminidase from Nitrosospira multiformis (strain ATCC 25196 / NCIMB 11849 / C 71).